The chain runs to 691 residues: Elongation factor G (691 aa).

In terms of domain architecture, tr-type G spans glutamate 8 to valine 282. Residues alanine 17–threonine 24, aspartate 81–histidine 85, and asparagine 135–aspartate 138 each bind GTP.

This sequence belongs to the TRAFAC class translation factor GTPase superfamily. Classic translation factor GTPase family. EF-G/EF-2 subfamily.

The protein resides in the cytoplasm. Its function is as follows. Catalyzes the GTP-dependent ribosomal translocation step during translation elongation. During this step, the ribosome changes from the pre-translocational (PRE) to the post-translocational (POST) state as the newly formed A-site-bound peptidyl-tRNA and P-site-bound deacylated tRNA move to the P and E sites, respectively. Catalyzes the coordinated movement of the two tRNA molecules, the mRNA and conformational changes in the ribosome. The chain is Elongation factor G from Caldicellulosiruptor bescii (strain ATCC BAA-1888 / DSM 6725 / KCTC 15123 / Z-1320) (Anaerocellum thermophilum).